Consider the following 247-residue polypeptide: Homeobox-leucine zipper protein HOX15 (247 aa).

The interval 1-44 is disordered; that stretch reads MAQDDEDVGLALGLSLGSGGHRRQRESRDEAPSSAAASLLTLRL. The span at 32–44 shows a compositional bias: low complexity; sequence PSSAAASLLTLRL. Residues 91 to 150 constitute a DNA-binding region (homeobox); the sequence is NSRKKLRLSKEQSALLEDRFKEHSTLNPKQKVALAKQLNLRPRQVEVWFQNRRARTKLKQ. The tract at residues 149-193 is leucine-zipper; it reads KQTEVDCELLKRCCETLTEENRRLHRELQQLRALTHSTAAGFFMA. The segment at 221-247 is disordered; the sequence is SPTAAADRTNKPTAPHLFSPFAKSAAC.

The protein belongs to the HD-ZIP homeobox family. Class II subfamily. Expressed in seedlings, stems, leaf blades and panicles.

It is found in the nucleus. Probable transcription factor. This chain is Homeobox-leucine zipper protein HOX15 (HOX15), found in Oryza sativa subsp. japonica (Rice).